Here is a 337-residue protein sequence, read N- to C-terminus: Phenylalanine--tRNA ligase alpha subunit (337 aa).

Glu-258 provides a ligand contact to Mg(2+).

This sequence belongs to the class-II aminoacyl-tRNA synthetase family. Phe-tRNA synthetase alpha subunit type 1 subfamily. In terms of assembly, tetramer of two alpha and two beta subunits. Requires Mg(2+) as cofactor.

It is found in the cytoplasm. The enzyme catalyses tRNA(Phe) + L-phenylalanine + ATP = L-phenylalanyl-tRNA(Phe) + AMP + diphosphate + H(+). The chain is Phenylalanine--tRNA ligase alpha subunit from Burkholderia mallei (strain ATCC 23344).